The following is a 498-amino-acid chain: ATP synthase subunit beta, chloroplastic (498 aa).

172-179 serves as a coordination point for ATP; it reads GGAGVGKT.

It belongs to the ATPase alpha/beta chains family. In terms of assembly, F-type ATPases have 2 components, CF(1) - the catalytic core - and CF(0) - the membrane proton channel. CF(1) has five subunits: alpha(3), beta(3), gamma(1), delta(1), epsilon(1). CF(0) has four main subunits: a(1), b(1), b'(1) and c(9-12).

It localises to the plastid. The protein resides in the chloroplast thylakoid membrane. The catalysed reaction is ATP + H2O + 4 H(+)(in) = ADP + phosphate + 5 H(+)(out). Functionally, produces ATP from ADP in the presence of a proton gradient across the membrane. The catalytic sites are hosted primarily by the beta subunits. The sequence is that of ATP synthase subunit beta, chloroplastic from Panax ginseng (Korean ginseng).